A 173-amino-acid chain; its full sequence is 2-C-methyl-D-erythritol 2,4-cyclodiphosphate synthase (173 aa).

2 residues coordinate a divalent metal cation: D17 and H19. Residues 17–19 (DVH) and 49–50 (HS) contribute to the 4-CDP-2-C-methyl-D-erythritol 2-phosphate site. H57 serves as a coordination point for a divalent metal cation. 4-CDP-2-C-methyl-D-erythritol 2-phosphate contacts are provided by residues 76-80 (FPNTD), 147-150 (TTTE), and R157.

This sequence belongs to the IspF family. Homotrimer. Requires a divalent metal cation as cofactor.

The enzyme catalyses 4-CDP-2-C-methyl-D-erythritol 2-phosphate = 2-C-methyl-D-erythritol 2,4-cyclic diphosphate + CMP. Its pathway is isoprenoid biosynthesis; isopentenyl diphosphate biosynthesis via DXP pathway; isopentenyl diphosphate from 1-deoxy-D-xylulose 5-phosphate: step 4/6. Involved in the biosynthesis of isopentenyl diphosphate (IPP) and dimethylallyl diphosphate (DMAPP), two major building blocks of isoprenoid compounds. Catalyzes the conversion of 4-diphosphocytidyl-2-C-methyl-D-erythritol 2-phosphate (CDP-ME2P) to 2-C-methyl-D-erythritol 2,4-cyclodiphosphate (ME-CPP) with a corresponding release of cytidine 5-monophosphate (CMP). This is 2-C-methyl-D-erythritol 2,4-cyclodiphosphate synthase from Ehrlichia ruminantium (strain Gardel).